We begin with the raw amino-acid sequence, 383 residues long: ATP phosphoribosyltransferase regulatory subunit (383 aa).

It belongs to the class-II aminoacyl-tRNA synthetase family. HisZ subfamily. In terms of assembly, heteromultimer composed of HisG and HisZ subunits.

The protein resides in the cytoplasm. Its pathway is amino-acid biosynthesis; L-histidine biosynthesis; L-histidine from 5-phospho-alpha-D-ribose 1-diphosphate: step 1/9. Required for the first step of histidine biosynthesis. May allow the feedback regulation of ATP phosphoribosyltransferase activity by histidine. The chain is ATP phosphoribosyltransferase regulatory subunit from Chromobacterium violaceum (strain ATCC 12472 / DSM 30191 / JCM 1249 / CCUG 213 / NBRC 12614 / NCIMB 9131 / NCTC 9757 / MK).